A 270-amino-acid chain; its full sequence is Flavin-dependent thymidylate synthase (270 aa).

One can recognise a ThyX domain in the interval 13–218 (GFVRLVDQMG…PLAWAAFEEH (206 aa)). FAD is bound by residues Ser59, 82 to 84 (RHR), and Glu90. Residues 79–82 (QWFR), 90–94 (EISGR), and Arg157 contribute to the dUMP site. The ThyX motif motif lies at 82 to 92 (RHRTASVNEIS). FAD contacts are provided by residues 173-175 (DLH) and His179. Arg184 contributes to the dUMP binding site. Arg184 acts as the Involved in ionization of N3 of dUMP, leading to its activation in catalysis.

It belongs to the thymidylate synthase ThyX family. In terms of assembly, homotetramer. Requires FAD as cofactor.

The enzyme catalyses dUMP + (6R)-5,10-methylene-5,6,7,8-tetrahydrofolate + NADPH + H(+) = dTMP + (6S)-5,6,7,8-tetrahydrofolate + NADP(+). It functions in the pathway pyrimidine metabolism; dTTP biosynthesis. Its function is as follows. Catalyzes the reductive methylation of 2'-deoxyuridine-5'-monophosphate (dUMP) to 2'-deoxythymidine-5'-monophosphate (dTMP) while utilizing 5,10-methylenetetrahydrofolate (mTHF) as the methyl donor, and NADPH and FADH(2) as the reductant. This is Flavin-dependent thymidylate synthase from Thermus thermophilus (strain ATCC BAA-163 / DSM 7039 / HB27).